Consider the following 386-residue polypeptide: 26S proteasome non-ATPase regulatory subunit 13 homolog A (386 aa).

An N-acetylalanine modification is found at A2. The 175-residue stretch at 173–347 (EFSDFYKSAL…GTIYVSWAQP (175 aa)) folds into the PCI domain.

The protein belongs to the proteasome subunit S11 family. In terms of assembly, component of the 19S regulatory particle (RP/PA700) lid subcomplex of the 26S proteasome. The 26S proteasome is composed of a core protease (CP), known as the 20S proteasome, capped at one or both ends by the 19S regulatory particle (RP/PA700). The RP/PA700 complex is composed of at least 17 different subunits in two subcomplexes, the base and the lid, which form the portions proximal and distal to the 20S proteolytic core, respectively. As to expression, ubiquitous with highest expression in flowers.

In terms of biological role, acts as a regulatory subunit of the 26S proteasome which is involved in the ATP-dependent degradation of ubiquitinated proteins. In Arabidopsis thaliana (Mouse-ear cress), this protein is 26S proteasome non-ATPase regulatory subunit 13 homolog A (RPN9A).